Reading from the N-terminus, the 201-residue chain is 3-isopropylmalate dehydratase small subunit (201 aa).

It belongs to the LeuD family. LeuD type 1 subfamily. As to quaternary structure, heterodimer of LeuC and LeuD.

The enzyme catalyses (2R,3S)-3-isopropylmalate = (2S)-2-isopropylmalate. Its pathway is amino-acid biosynthesis; L-leucine biosynthesis; L-leucine from 3-methyl-2-oxobutanoate: step 2/4. In terms of biological role, catalyzes the isomerization between 2-isopropylmalate and 3-isopropylmalate, via the formation of 2-isopropylmaleate. This is 3-isopropylmalate dehydratase small subunit from Roseobacter denitrificans (strain ATCC 33942 / OCh 114) (Erythrobacter sp. (strain OCh 114)).